The primary structure comprises 343 residues: MTLNSLPIFLVLISGIFCQYDYGPADDYGYDPFGPSTAVCAPECNCPLSYPTAMYCDNLKLKTIPIVPSGIKYLYLRNNMIEAIEENTFDNVTDLQWLILDHNHLENSKIKGRVFSKLKNLKKLHINYNNLTEAVGPLPKTLDDLQLSHNKITKVNPGALEGLVNLTVIHLQNNQLKTDSISGAFKGLNSLLYLDLSFNQLTKLPTGLPHSLLMLYFDNNQISNIPDEYFQGFKTLQYLRLSHNKLTDSGIPGNVFNITSLVELDLSFNQLKSIPTVSENLENFYLQVNKINKFPLSSFCKVVGPLTYSKITHLRLDGNNLTRADLPQEMYNCLRVAADISLE.

The signal sequence occupies residues 1–18 (MTLNSLPIFLVLISGIFC). Gln19 carries the post-translational modification Pyrrolidone carboxylic acid. Sulfotyrosine occurs at positions 20 and 22. The LRRNT domain occupies 31 to 69 (DPFGPSTAVCAPECNCPLSYPTAMYCDNLKLKTIPIVPS). LRR repeat units follow at residues 70 to 91 (GIKY…TFDN), 94 to 117 (DLQW…VFSK), 120 to 140 (NLKK…PLPK), 141 to 162 (TLDD…ALEG), 165 to 186 (NLTV…GAFK), 190 to 211 (SLLY…LPHS), 212 to 232 (LLML…YFQG), and 235 to 255 (TLQY…PGNV). The N-linked (GlcNAc...) (keratan sulfate) asparagine glycan is linked to Asn91. N-linked (GlcNAc...) (keratan sulfate) asparagine glycosylation occurs at Asn130. Asn165 carries N-linked (GlcNAc...) (keratan sulfate) asparagine glycosylation. Asn257 is a glycosylation site (N-linked (GlcNAc...) (keratan sulfate) asparagine). LRR repeat units follow at residues 260-281 (SLVE…SENL), 282-301 (ENFY…SFCK), and 310-330 (KITH…PQEM). A disulfide bond links Cys300 and Cys333. The N-linked (GlcNAc...) asparagine glycan is linked to Asn320.

The protein belongs to the small leucine-rich proteoglycan (SLRP) family. SLRP class II subfamily. As to quaternary structure, binds to laminin. Contains keratan sulfate. As to expression, cornea and other tissues.

It localises to the secreted. Its subcellular location is the extracellular space. The protein resides in the extracellular matrix. The protein is Lumican (LUM) of Gallus gallus (Chicken).